A 650-amino-acid chain; its full sequence is Phosphomethylpyrimidine synthase (650 aa).

Residues Asn-241, Met-270, Tyr-299, His-335, 355-357, 396-399, and Glu-435 contribute to the substrate site; these read SRG and DGLR. Zn(2+) is bound at residue His-439. Tyr-462 is a substrate binding site. His-503 is a binding site for Zn(2+). The [4Fe-4S] cluster site is built by Cys-583, Cys-586, and Cys-591.

Belongs to the ThiC family. Homodimer. It depends on [4Fe-4S] cluster as a cofactor.

It carries out the reaction 5-amino-1-(5-phospho-beta-D-ribosyl)imidazole + S-adenosyl-L-methionine = 4-amino-2-methyl-5-(phosphooxymethyl)pyrimidine + CO + 5'-deoxyadenosine + formate + L-methionine + 3 H(+). The protein operates within cofactor biosynthesis; thiamine diphosphate biosynthesis. Catalyzes the synthesis of the hydroxymethylpyrimidine phosphate (HMP-P) moiety of thiamine from aminoimidazole ribotide (AIR) in a radical S-adenosyl-L-methionine (SAM)-dependent reaction. This Pseudoalteromonas translucida (strain TAC 125) protein is Phosphomethylpyrimidine synthase.